We begin with the raw amino-acid sequence, 387 residues long: Colicin-N (387 aa).

Over residues 1 to 11 (MGSNGADNAHN) the composition is skewed to polar residues. The tract at residues 1–106 (MGSNGADNAH…ITITPDNSKP (106 aa)) is disordered. Residues 14 to 30 (FGGGKNPGIGNTSGAGS) are compositionally biased toward gly residues. A compositionally biased stretch (low complexity) spans 31–48 (NGSASSNRGNSNGWSWSN). Positions 78 to 87 (GNSGNRGNNG) are enriched in gly residues. Helical transmembrane passes span 325-345 (IIGGVVAGVAISLFGAVLSFL) and 350-370 (LAVTALGVIGIMTISYLSSFI).

It belongs to the channel forming colicin family.

The protein localises to the cell membrane. This colicin is a channel-forming colicin. This class of transmembrane toxins depolarize the cytoplasmic membrane, leading to dissipation of cellular energy. Its function is as follows. Colicins are polypeptide toxins produced by and active against E.coli and closely related bacteria. This is Colicin-N (cna) from Escherichia coli.